We begin with the raw amino-acid sequence, 224 residues long: MNLRLCSGCRHNGIVSEQGYEYCIFCESVFQKCTKVQKKSNFHVSNKLIHLRNVLRRLLSHQCSGEIISELLDIMEKNQISTDDVDANFVSSFLKANERINKKDYKLVFEIINQVKDEKLNLSTEKINEVVEIFKHLVFFCQENTPSKTINYSFFLDKIFDITSVTKNLKPQTVKNYTKNNSNQLVWENFLAHMRSKKRVTMVEDYGHEYVFVDERFSTCSLEV.

A zinc finger spans residues 6–26 (CSGCRHNGIVSEQGYEYCIFC).

The protein belongs to the orthopoxvirus VLTF-3/OPG127 family. Interacts with the late transcription elongation factor VLTF-4/OPG110. Interacts with the late transcription factors VLTF-1/OPG093.

In terms of biological role, acts with RNA polymerase to initiate transcription from late gene promoters. The polypeptide is Viral late gene transcription factor 3 (OPG127) (Vaccinia virus (strain Ankara) (VACV)).